The sequence spans 54 residues: Potassium channel toxin alpha-KTx 14.1 (54 aa).

The N-terminal stretch at 1 to 23 (MKIFFAILLILAVCSMAIWTVNG) is a signal peptide.

Belongs to the short scorpion toxin superfamily. Potassium channel inhibitor family. Alpha-KTx 14 subfamily. Post-translationally, probably has three disulfide bridges. In terms of tissue distribution, expressed by the venom gland.

It is found in the secreted. Potential blocker of potassium channels. This is Potassium channel toxin alpha-KTx 14.1 from Olivierus martensii (Manchurian scorpion).